The sequence spans 433 residues: Enolase 2 (433 aa).

Residues 34 to 56 form a disordered region; that stretch reads RGMVPSGASTGEHEAVELRDGDK. Over residues 44–56 the composition is skewed to basic and acidic residues; that stretch reads GEHEAVELRDGDK. Gln163 provides a ligand contact to (2R)-2-phosphoglycerate. The Proton donor role is filled by Glu205. Positions 243, 290, and 317 each coordinate Mg(2+). Positions 342, 371, 372, and 393 each coordinate (2R)-2-phosphoglycerate. Lys342 acts as the Proton acceptor in catalysis.

Belongs to the enolase family. It depends on Mg(2+) as a cofactor.

It localises to the cytoplasm. The protein localises to the secreted. It is found in the cell surface. The catalysed reaction is (2R)-2-phosphoglycerate = phosphoenolpyruvate + H2O. The protein operates within carbohydrate degradation; glycolysis; pyruvate from D-glyceraldehyde 3-phosphate: step 4/5. Catalyzes the reversible conversion of 2-phosphoglycerate (2-PG) into phosphoenolpyruvate (PEP). It is essential for the degradation of carbohydrates via glycolysis. The polypeptide is Enolase 2 (Lactococcus lactis subsp. cremoris (strain SK11)).